The chain runs to 113 residues: Protein ORF3 (113 aa).

Hydrophobic stretches follow at residues 1–21 (MGSPCALGLFCCCSSCFCLCC) and 32–52 (AVVGGATAVPAVVSGVTGLIL). Residues 27–67 (ASRLAAVVGGATAVPAVVSGVTGLILSPSPSPIFIQPTPSL) are interaction with host HPX. An interaction with the capsid protein region spans residues 47 to 71 (VTGLILSPSPSPIFIQPTPSLPMSF). Serine 70 is modified (phosphoserine; by host). The tract at residues 71–113 (FHNPGLELALDSRPAPLAPLGVTSPSAPPLPPVVDLPQLGLRR) is homodimerization, and interaction with host AMBP/bikunin. The interval 89-113 (PLGVTSPSAPPLPPVVDLPQLGLRR) is disordered. An interaction with host SRC, HCK, FYN, PIK3R3 and GRB2 region spans residues 94–103 (SPSAPPLPPV). The PTAP/PSAP motif signature appears at 95–98 (PSAP).

It belongs to the hepevirus ORF3 protein family. As to quaternary structure, forms homooligomers. Interacts with host SRC, HCK, FYN, PIK3R3 and GRB2 (via SH3 domain); binding does not activate the kinases. Interacts with host AMBP/bikunin and AMBP/alpha-1-microglobulin peptides. Interacts with host HPX/hemopexin. Interacts (when phosphorylated) with capsid protein ORF2. Interacts with host TSG101; this interaction plays a role in viral release from the host cell. Interacts with host SIRPA; this interaction down-regulates the phosphorylation of host IRF3. Post-translationally, palmitoylated in the N-terminus.

The protein localises to the host endoplasmic reticulum membrane. The protein resides in the host cytoplasm. It is found in the host cytoskeleton. Its subcellular location is the virion. It localises to the host cell membrane. Small multifunctional phosphoprotein involved in virion morphogenesis, egress and counteracting host innate immunity. Plays critical roles in the final steps of viral release by interacting with host TSG101, a member of the vacuolar protein-sorting pathway and using other cellular host proteins involved in vesicle formation pathway. Also acts as a viroporin and forms ion conductive pores allowing viral particle release. Impairs the generation of type I interferon by down-regulating host TLR3 and TLR7 as well as their downstream signaling pathways. Down-regulates the phosphorylation of host IRF3 via the interaction with host SIRP-alpha, thereby inhibiting IFN-I expression. Interacts with host microtubules. The sequence is that of Protein ORF3 from Bandicota bengalensis (lesser bandicoot rat).